The following is a 193-amino-acid chain: Small ribosomal subunit protein eS1 (193 aa).

The protein belongs to the eukaryotic ribosomal protein eS1 family.

This Methanobrevibacter smithii (strain ATCC 35061 / DSM 861 / OCM 144 / PS) protein is Small ribosomal subunit protein eS1.